We begin with the raw amino-acid sequence, 121 residues long: LSM complex subunit lsm4 (121 aa).

The 74-residue stretch at 2–75 (LPLTLLNATQ…IKYLRIQDEV (74 aa)) folds into the Sm domain. Residues 82 to 121 (QQAQQRENRGSRFRGRGQRGRGNYGHTAPNRRGRGRGGHM) are disordered. The segment covering 110–121 (PNRRGRGRGGHM) has biased composition (basic residues).

This sequence belongs to the snRNP Sm proteins family. In terms of assembly, component of the heptameric LSM1-LSM7 complex that forms a seven-membered ring structure with a donut shape. The LSm subunits are arranged in the order lsm1, lsm2, lsm3, lsm6, lsm5, lsm7 and lsm4. Component of the heptameric LSM2-LSM8 complex that forms a seven-membered ring structure with a donut shape. The LSm subunits are arranged in the order lsm8, lsm2, lsm3, lsm6, lsm5, lsm7 and lsm4.

It is found in the nucleus. It localises to the cytoplasm. Its function is as follows. Component of LSm protein complexes, which are involved in RNA processing and may function in a chaperone-like manner. Component of the cytoplasmic LSM1-LSM7 complex which is involved in mRNA degradation by activating the decapping step. The LSM1-LSM7 complex loads onto the 3'-end of single stranded RNA. Component of the nuclear LSM2-LSM8 complex, which is involved in spliceosome assembly. The LSM2-LSM8 complex plays a role in the biogenesis of the spliceosomal U4/U6-U5 tri-snRNP complex by accelerating prp24-mediated annealing of U4/U6 di-snRNA. The LSM2-LSM8 complex binds U6 snRNA terminating with a cyclic 2',3' phosphate group; RNA with an unmodified 3' hydroxyl or non-cyclic 3' phosphate is bound less tightly. This is LSM complex subunit lsm4 (lsm4) from Schizosaccharomyces pombe (strain 972 / ATCC 24843) (Fission yeast).